The following is a 142-amino-acid chain: Putative pre-16S rRNA nuclease (142 aa).

The protein belongs to the YqgF nuclease family.

The protein localises to the cytoplasm. In terms of biological role, could be a nuclease involved in processing of the 5'-end of pre-16S rRNA. The chain is Putative pre-16S rRNA nuclease from Mesoplasma florum (strain ATCC 33453 / NBRC 100688 / NCTC 11704 / L1) (Acholeplasma florum).